The chain runs to 185 residues: Elongation factor P (185 aa).

Belongs to the elongation factor P family.

The protein localises to the cytoplasm. It functions in the pathway protein biosynthesis; polypeptide chain elongation. Involved in peptide bond synthesis. Stimulates efficient translation and peptide-bond synthesis on native or reconstituted 70S ribosomes in vitro. Probably functions indirectly by altering the affinity of the ribosome for aminoacyl-tRNA, thus increasing their reactivity as acceptors for peptidyl transferase. This chain is Elongation factor P, found in Carboxydothermus hydrogenoformans (strain ATCC BAA-161 / DSM 6008 / Z-2901).